Here is a 344-residue protein sequence, read N- to C-terminus: Heat-inducible transcription repressor HrcA (344 aa).

This sequence belongs to the HrcA family.

In terms of biological role, negative regulator of class I heat shock genes (grpE-dnaK-dnaJ and groELS operons). Prevents heat-shock induction of these operons. The protein is Heat-inducible transcription repressor HrcA of Streptococcus sanguinis (strain SK36).